Here is a 246-residue protein sequence, read N- to C-terminus: 1-(5-phosphoribosyl)-5-[(5-phosphoribosylamino)methylideneamino] imidazole-4-carboxamide isomerase (246 aa).

The Proton acceptor role is filled by Asp-12. Asp-134 functions as the Proton donor in the catalytic mechanism.

Belongs to the HisA/HisF family.

The protein resides in the cytoplasm. The enzyme catalyses 1-(5-phospho-beta-D-ribosyl)-5-[(5-phospho-beta-D-ribosylamino)methylideneamino]imidazole-4-carboxamide = 5-[(5-phospho-1-deoxy-D-ribulos-1-ylimino)methylamino]-1-(5-phospho-beta-D-ribosyl)imidazole-4-carboxamide. Its pathway is amino-acid biosynthesis; L-histidine biosynthesis; L-histidine from 5-phospho-alpha-D-ribose 1-diphosphate: step 4/9. The polypeptide is 1-(5-phosphoribosyl)-5-[(5-phosphoribosylamino)methylideneamino] imidazole-4-carboxamide isomerase (Psychrobacter cryohalolentis (strain ATCC BAA-1226 / DSM 17306 / VKM B-2378 / K5)).